Consider the following 310-residue polypeptide: HPr kinase/phosphorylase (310 aa).

Catalysis depends on residues His138 and Lys159. ATP is bound at residue 153–160 (GKSGVGKS). Position 160 (Ser160) interacts with Mg(2+). The active-site Proton acceptor; for phosphorylation activity. Proton donor; for dephosphorylation activity is Asp177. Residues 201-210 (LEIRGLGIIN) are important for the catalytic mechanism of both phosphorylation and dephosphorylation. Mg(2+) is bound at residue Glu202. Arg243 is a catalytic residue. Residues 264 to 269 (PVRPGR) form an important for the catalytic mechanism of dephosphorylation region.

Belongs to the HPrK/P family. Homohexamer. It depends on Mg(2+) as a cofactor.

The catalysed reaction is [HPr protein]-L-serine + ATP = [HPr protein]-O-phospho-L-serine + ADP + H(+). It carries out the reaction [HPr protein]-O-phospho-L-serine + phosphate + H(+) = [HPr protein]-L-serine + diphosphate. Catalyzes the ATP- as well as the pyrophosphate-dependent phosphorylation of a specific serine residue in HPr, a phosphocarrier protein of the phosphoenolpyruvate-dependent sugar phosphotransferase system (PTS). HprK/P also catalyzes the pyrophosphate-producing, inorganic phosphate-dependent dephosphorylation (phosphorolysis) of seryl-phosphorylated HPr (P-Ser-HPr). The two antagonistic activities of HprK/P are regulated by several intracellular metabolites, which change their concentration in response to the absence or presence of rapidly metabolisable carbon sources (glucose, fructose, etc.) in the growth medium. Also phosphorylates/dephosphorylates the HPr-like catabolite repression protein crh on a specific serine residue. Therefore, by controlling the phosphorylation state of HPr and crh, HPrK/P is a sensor enzyme that plays a major role in the regulation of carbon metabolism and sugar transport: it mediates carbon catabolite repression (CCR), and regulates PTS-catalyzed carbohydrate uptake and inducer exclusion. The chain is HPr kinase/phosphorylase from Bacillus velezensis (strain DSM 23117 / BGSC 10A6 / LMG 26770 / FZB42) (Bacillus amyloliquefaciens subsp. plantarum).